Consider the following 889-residue polypeptide: Voltage-gated potassium channel KCNC3 (889 aa).

The important for normal N-type inactivation stretch occupies residues 1–80; it reads MLSSVCVWSF…CSGLPAVAMG (80 aa). The Cytoplasmic portion of the chain corresponds to 1–291; that stretch reads MLSSVCVWSF…EDPYSSRAAR (291 aa). The interval 10 to 66 is disordered; sequence FSGRQGTRKQHSQPAPTPQPPESSPPPLLPPPQQQCAQPGTAASPAGAPLSCGPGGR. The span at 24-42 shows a compositional bias: pro residues; that stretch reads APTPQPPESSPPPLLPPPQ. H159, C165, C186, and C187 together coordinate Zn(2+). The interval 202 to 231 is disordered; the sequence is DSFEAPDSSGNANANAGGAHDAGLDDEAGA. Low complexity predominate over residues 211 to 222; it reads GNANANAGGAHD. A helical membrane pass occupies residues 292–310; that stretch reads YVAFASLFFILISITTFCL. The N-linked (GlcNAc...) asparagine glycan is linked to N321. A helical membrane pass occupies residues 352–371; it reads VEGVCVVWFTFEFLMRVTFC. Over 372 to 380 the chain is Cytoplasmic; it reads PDKVEFLKS. Residues 381 to 399 form a helical membrane-spanning segment; the sequence is SLNIIDCVAILPFYLEVGL. The chain crosses the membrane as a helical; Voltage-sensor span at residues 413-435; that stretch reads FLRVVRFVRILRIFKLTRHFVGL. Over 436–448 the chain is Cytoplasmic; that stretch reads RVLGHTLRASTNE. Residues 449 to 470 form a helical membrane-spanning segment; that stretch reads FLLLIIFLALGVLIFATMIYYA. K(+) contacts are provided by T504, L505, G506, and Y507. The short motif at 504–509 is the Selectivity filter element; the sequence is TLGYGD. Residues 519–540 form a helical membrane-spanning segment; that stretch reads LVGALCALAGVLTIAMPVPVIV. At 541-889 the chain is on the cytoplasmic side; that stretch reads NNFGMYYSLA…FPSRHSSPAV (349 aa). Disordered regions lie at residues 557–627, 691–834, and 852–889; these read PKKK…LLRG, IDQP…PQSL, and TLGFPLSLPPRLATGNGGRECPRDPGLPFPSRHSSPAV. R626 bears the Omega-N-methylarginine mark. Phosphoserine occurs at positions 697 and 702. Over residues 748-764 the composition is skewed to low complexity; the sequence is SQAPPASCPTSTPTQQP. T759 bears the Phosphothreonine mark. A compositionally biased stretch (basic residues) spans 794–808; that stretch reads HRSHQPPGKHQRGGR.

Belongs to the potassium channel family. C (Shaw) (TC 1.A.1.2) subfamily. Kv3.3/KCNC3 sub-subfamily. In terms of assembly, homotetramer. Heterotetramer with KCNC1. Interacts (via C-terminus) with HAX1; this interaction modulates channel gating. Identified in a complex with ACTR3, a subunit of the Arp2/3 complex; this interaction is indirect and depends on the presence of HAX1. In terms of processing, N-glycosylated. Detected on Purkinje cells in the cerebellum molecular layer (at protein level).

It localises to the cell membrane. The protein localises to the presynaptic cell membrane. It is found in the perikaryon. Its subcellular location is the cell projection. The protein resides in the axon. It localises to the dendrite. The protein localises to the dendritic spine membrane. It is found in the cytoplasm. Its subcellular location is the cell cortex. The protein resides in the cytoskeleton. The enzyme catalyses K(+)(in) = K(+)(out). Voltage-gated potassium channel that plays an important role in the rapid repolarization of fast-firing brain neurons. The channel opens in response to the voltage difference across the membrane, forming a potassium-selective channel through which potassium ions pass in accordance with their electrochemical gradient. The channel displays rapid activation and inactivation kinetics. It plays a role in the regulation of the frequency, shape and duration of action potentials in Purkinje cells. Required for normal survival of cerebellar neurons, probably via its role in regulating the duration and frequency of action potentials that in turn regulate the activity of voltage-gated Ca(2+) channels and cellular Ca(2+) homeostasis. Required for normal motor function. Plays a role in the reorganization of the cortical actin cytoskeleton and the formation of actin veil structures in neuronal growth cones via its interaction with HAX1 and the Arp2/3 complex. This is Voltage-gated potassium channel KCNC3 from Rattus norvegicus (Rat).